The sequence spans 300 residues: 33 kDa chaperonin (300 aa).

2 cysteine pairs are disulfide-bonded: Cys247–Cys249 and Cys280–Cys283.

Belongs to the HSP33 family. Post-translationally, under oxidizing conditions two disulfide bonds are formed involving the reactive cysteines. Under reducing conditions zinc is bound to the reactive cysteines and the protein is inactive.

Its subcellular location is the cytoplasm. Its function is as follows. Redox regulated molecular chaperone. Protects both thermally unfolding and oxidatively damaged proteins from irreversible aggregation. Plays an important role in the bacterial defense system toward oxidative stress. The protein is 33 kDa chaperonin of Prochlorococcus marinus (strain MIT 9312).